A 502-amino-acid polypeptide reads, in one-letter code: Glycerol kinase (502 aa).

Position 14 (T14) interacts with ADP. Residues T14, T15, and S16 each contribute to the ATP site. T14 contacts sn-glycerol 3-phosphate. R18 provides a ligand contact to ADP. R84, E85, Y136, and D246 together coordinate sn-glycerol 3-phosphate. Glycerol-binding residues include R84, E85, Y136, D246, and Q247. Positions 268 and 311 each coordinate ADP. ATP contacts are provided by T268, G311, Q315, and G412. The ADP site is built by G412 and N416.

It belongs to the FGGY kinase family. In terms of assembly, homotetramer and homodimer (in equilibrium). Heterodimer with EIIA-Glc. Binds 1 zinc ion per glycerol kinase EIIA-Glc dimer. The zinc ion is important for dimerization.

The enzyme catalyses glycerol + ATP = sn-glycerol 3-phosphate + ADP + H(+). The protein operates within polyol metabolism; glycerol degradation via glycerol kinase pathway; sn-glycerol 3-phosphate from glycerol: step 1/1. Activity of this regulatory enzyme is affected by several metabolites. Allosterically and non-competitively inhibited by fructose 1,6-bisphosphate (FBP) and unphosphorylated phosphocarrier protein EIIA-Glc (III-Glc), an integral component of the bacterial phosphotransferase (PTS) system. In terms of biological role, key enzyme in the regulation of glycerol uptake and metabolism. Catalyzes the phosphorylation of glycerol to yield sn-glycerol 3-phosphate. This is Glycerol kinase from Shigella boydii serotype 18 (strain CDC 3083-94 / BS512).